Reading from the N-terminus, the 288-residue chain is Bifunctional protein FolD (288 aa).

NADP(+) contacts are provided by residues 166 to 168 and isoleucine 232; that span reads GAS.

This sequence belongs to the tetrahydrofolate dehydrogenase/cyclohydrolase family. As to quaternary structure, homodimer.

It carries out the reaction (6R)-5,10-methylene-5,6,7,8-tetrahydrofolate + NADP(+) = (6R)-5,10-methenyltetrahydrofolate + NADPH. It catalyses the reaction (6R)-5,10-methenyltetrahydrofolate + H2O = (6R)-10-formyltetrahydrofolate + H(+). It functions in the pathway one-carbon metabolism; tetrahydrofolate interconversion. In terms of biological role, catalyzes the oxidation of 5,10-methylenetetrahydrofolate to 5,10-methenyltetrahydrofolate and then the hydrolysis of 5,10-methenyltetrahydrofolate to 10-formyltetrahydrofolate. The sequence is that of Bifunctional protein FolD from Cronobacter sakazakii (strain ATCC BAA-894) (Enterobacter sakazakii).